An 807-amino-acid chain; its full sequence is Putative histidine biosynthesis bifunctional protein HisCD (807 aa).

The histidinol dehydrogenase stretch occupies residues 1 to 440 (MTDHFDTLIR…ALNIAGQGVN (440 aa)). The Zn(2+) site is built by Q261 and H264. Catalysis depends on residues E328 and H329. D362 and H421 together coordinate Zn(2+). The segment at 441-807 (MNNIFDANLL…VNEQPKEIAN (367 aa)) is histidinol-phosphate aminotransferase. At K655 the chain carries N6-(pyridoxal phosphate)lysine.

It in the N-terminal section; belongs to the histidinol dehydrogenase family. In the C-terminal section; belongs to the class-II pyridoxal-phosphate-dependent aminotransferase family. Histidinol-phosphate aminotransferase subfamily. In terms of assembly, homodimer. Zn(2+) serves as cofactor. Pyridoxal 5'-phosphate is required as a cofactor.

It catalyses the reaction L-histidinol phosphate + 2-oxoglutarate = 3-(imidazol-4-yl)-2-oxopropyl phosphate + L-glutamate. The enzyme catalyses L-histidinol + 2 NAD(+) + H2O = L-histidine + 2 NADH + 3 H(+). It participates in amino-acid biosynthesis; L-histidine biosynthesis; L-histidine from 5-phospho-alpha-D-ribose 1-diphosphate: step 7/9. Its pathway is amino-acid biosynthesis; L-histidine biosynthesis; L-histidine from 5-phospho-alpha-D-ribose 1-diphosphate: step 9/9. Its function is as follows. Catalyzes the sequential NAD-dependent oxidations of L-histidinol to L-histidinaldehyde and then to L-histidine. This Photorhabdus laumondii subsp. laumondii (strain DSM 15139 / CIP 105565 / TT01) (Photorhabdus luminescens subsp. laumondii) protein is Putative histidine biosynthesis bifunctional protein HisCD (hisCD).